The sequence spans 472 residues: Radical SAM cyclopropyl synthase TigE (472 aa).

The Radical SAM core domain occupies glycine 106–aspartate 331. [4Fe-4S] cluster-binding residues include cysteine 120, cysteine 124, cysteine 127, tyrosine 339, cysteine 360, cysteine 378, cysteine 414, cysteine 417, cysteine 423, cysteine 427, and cysteine 446.

Belongs to the radical SAM superfamily. It depends on [4Fe-4S] cluster as a cofactor.

It catalyses the reaction L-isoleucyl-[protein] + AH2 + 2 S-adenosyl-L-methionine = methylcyclopropylglycine-[protein] + 2 5'-deoxyadenosine + 2 L-methionine + A + 2 H(+). Radical S-adenosylmethionine (SAM) enzyme that catalyzes the formation of methylcyclopropylglycine (mCPG) residues from isoleucine residues residing in the repeating TIGSVS motif of the precursor peptide TigB. Is thus involved in the maturation of a ribosomally synthesized and post-translationally modified peptide (RiPP). This is Radical SAM cyclopropyl synthase TigE from Paramaledivibacter caminithermalis (strain DSM 15212 / CIP 107654 / DViRD3) (Clostridium caminithermale).